We begin with the raw amino-acid sequence, 435 residues long: UDP-glucuronic acid decarboxylase 1 (435 aa).

The tract at residues 1-33 (MKQLHKQMSSKRDEETIPMSQSSPYSPKTLKHP) is disordered. At 1-48 (MKQLHKQMSSKRDEETIPMSQSSPYSPKTLKHPRSLPRSLHYLFREQR) the chain is on the cytoplasmic side. A helical; Signal-anchor for type II membrane protein transmembrane segment spans residues 49–69 (LLFILVGILIGSTFFILQPSL). Residues 70–435 (SRLGAAESTS…ILNEDEGKGL (366 aa)) are Lumenal-facing. Over residues 91-100 (DSPPSRSTFN) the composition is skewed to polar residues. The disordered stretch occupies residues 91–110 (DSPPSRSTFNSGGGGGRTGR). The NAD(+) site is built by Gly129, Phe130, Val131, Asp150, Asn151, Phe153, Thr154, Gly155, Asp175, and Val176. Residue Ile180 participates in UDP-alpha-D-glucuronate binding. Residue Leu190 coordinates NAD(+). Residue Lys208 coordinates UDP-alpha-D-glucuronate. Thr209 serves as a coordination point for NAD(+). UDP-alpha-D-glucuronate is bound by residues Asn216, Gly219, Lys222, and Arg223. NAD(+)-binding residues include Tyr262 and Lys266. Tyr262 serves as the catalytic Proton acceptor. Tyr276 is a binding site for UDP-alpha-D-glucuronate. NAD(+) contacts are provided by Thr292 and Arg303. A disordered region spans residues 380 to 401 (EFKPNTADDPHKRKPDISKAKE). The segment covering 385–401 (TADDPHKRKPDISKAKE) has biased composition (basic and acidic residues).

Belongs to the NAD(P)-dependent epimerase/dehydratase family. UDP-glucuronic acid decarboxylase subfamily. The cofactor is NAD(+). Ubiquitous.

Its subcellular location is the golgi apparatus. The protein localises to the golgi stack membrane. The enzyme catalyses UDP-alpha-D-glucuronate + H(+) = UDP-alpha-D-xylose + CO2. It functions in the pathway nucleotide-sugar biosynthesis; UDP-alpha-D-xylose biosynthesis; UDP-alpha-D-xylose from UDP-alpha-D-glucuronate: step 1/1. In terms of biological role, catalyzes the NAD-dependent decarboxylation of UDP-glucuronic acid to UDP-xylose. Necessary for the biosynthesis of the core tetrasaccharide in glycosaminoglycan biosynthesis. The chain is UDP-glucuronic acid decarboxylase 1 from Arabidopsis thaliana (Mouse-ear cress).